Consider the following 683-residue polypeptide: Bifunctional lysine-specific demethylase and histidyl-hydroxylase NO66 (683 aa).

Over residues 1 to 26 the composition is skewed to polar residues; the sequence is MHKASTSSANRANFQGNHKTQKSPNN. Disordered stretches follow at residues 1–162 and 179–208; these read MHKA…SPIQ and AAGASGASGPAKSCPLPEKRKSLPAGAAKS. Over residues 54 to 65 the composition is skewed to basic and acidic residues; it reads LTKEQKERRKMM. Residues 85–94 show a composition bias toward polar residues; sequence IDTSASTSNK. Over residues 95–108 the composition is skewed to basic residues; it reads GKSKAARPTDRKRR. A compositionally biased stretch (low complexity) spans 116-125; it reads PADANNNNTK. S152 carries the post-translational modification Phosphoserine. The residue at position 158 (T158) is a Phosphothreonine. Phosphoserine is present on S159. Positions 179-189 are enriched in low complexity; it reads AAGASGASGPA. The JmjC domain maps to 341 to 480; the sequence is NPSTYLVGLR…NLLEKLMPIV (140 aa). Residues H381, D383, and H446 each coordinate Fe cation.

Belongs to the ROX family. NO66 subfamily. Requires Fe(2+) as cofactor.

The protein resides in the nucleus. The enzyme catalyses N(6),N(6)-dimethyl-L-lysyl(36)-[histone H3] + 2 2-oxoglutarate + 2 O2 = L-lysyl(36)-[histone H3] + 2 formaldehyde + 2 succinate + 2 CO2. Oxygenase that can act as both a histone lysine demethylase and a ribosomal histidine hydroxylase. Specifically demethylates 'Lys-4' (H3K4me) and 'Lys-36' (H3K36me) of histone H3, thereby playing a central role in histone code. This is Bifunctional lysine-specific demethylase and histidyl-hydroxylase NO66 from Drosophila yakuba (Fruit fly).